Consider the following 665-residue polypeptide: Alpha-1,4-glucan:maltose-1-phosphate maltosyltransferase (665 aa).

Residues lysine 255, glutamine 315, and aspartate 350 each contribute to the alpha-maltose 1-phosphate site. Aspartate 386 acts as the Nucleophile in catalysis. Residue asparagine 387 coordinates alpha-maltose 1-phosphate. Catalysis depends on glutamate 415, which acts as the Proton donor. 526 to 527 (KY) contributes to the alpha-maltose 1-phosphate binding site.

It belongs to the glycosyl hydrolase 13 family. GlgE subfamily. In terms of assembly, homodimer.

The enzyme catalyses alpha-maltose 1-phosphate + [(1-&gt;4)-alpha-D-glucosyl](n) = [(1-&gt;4)-alpha-D-glucosyl](n+2) + phosphate. Functionally, maltosyltransferase that uses maltose 1-phosphate (M1P) as the sugar donor to elongate linear or branched alpha-(1-&gt;4)-glucans. Is involved in a branched alpha-glucan biosynthetic pathway from trehalose, together with TreS, Mak and GlgB. This Myxococcus xanthus (strain DK1622) protein is Alpha-1,4-glucan:maltose-1-phosphate maltosyltransferase.